Reading from the N-terminus, the 117-residue chain is Photosystem II reaction center Psb28 protein (117 aa).

Belongs to the Psb28 family. Part of the photosystem II complex.

The protein resides in the cellular thylakoid membrane. The chain is Photosystem II reaction center Psb28 protein from Prochlorococcus marinus (strain MIT 9312).